A 234-amino-acid chain; its full sequence is UPF0173 metal-dependent hydrolase Msp_0516 (234 aa).

Belongs to the UPF0173 family.

This Methanosphaera stadtmanae (strain ATCC 43021 / DSM 3091 / JCM 11832 / MCB-3) protein is UPF0173 metal-dependent hydrolase Msp_0516.